We begin with the raw amino-acid sequence, 349 residues long: tRNA pseudouridine synthase D (349 aa).

F27 contributes to the substrate binding site. Residue D80 is the Nucleophile of the active site. Substrate is bound at residue N129. Residues 155–303 (GVPNYFGAQR…VEASRRAMLL (149 aa)) form the TRUD domain. Position 329 (F329) interacts with substrate.

This sequence belongs to the pseudouridine synthase TruD family.

It catalyses the reaction uridine(13) in tRNA = pseudouridine(13) in tRNA. Its function is as follows. Responsible for synthesis of pseudouridine from uracil-13 in transfer RNAs. This Salmonella choleraesuis (strain SC-B67) protein is tRNA pseudouridine synthase D.